Here is a 238-residue protein sequence, read N- to C-terminus: 15,16-dihydrobiliverdin:ferredoxin oxidoreductase (238 aa).

Belongs to the HY2 family.

It carries out the reaction 15,16-dihydrobiliverdin + oxidized 2[4Fe-4S]-[ferredoxin] = biliverdin IXalpha + reduced 2[4Fe-4S]-[ferredoxin] + 2 H(+). Catalyzes the two-electron reduction of biliverdin IX-alpha at the C15 methine bridge. This is 15,16-dihydrobiliverdin:ferredoxin oxidoreductase from Prochlorococcus marinus (strain NATL2A).